Consider the following 451-residue polypeptide: Chromosomal replication initiator protein DnaA (451 aa).

The domain I, interacts with DnaA modulators stretch occupies residues 1 to 77 (MTENEQIFWN…EVYNAQISVD (77 aa)). The interval 77 to 110 (DYVFEEDLMIEQNQTKINQKPKQQALNSLPTVTS) is domain II. The tract at residues 111–329 (DLNPKYSFEN…GALKDISLVA (219 aa)) is domain III, AAA+ region. ATP-binding residues include Gly-155, Gly-157, Lys-158, and Thr-159. Positions 330–451 (NFKQIDTITV…EIETIKNKIK (122 aa)) are domain IV, binds dsDNA.

Belongs to the DnaA family. In terms of assembly, oligomerizes as a right-handed, spiral filament on DNA at oriC.

Its subcellular location is the cytoplasm. Functionally, plays an essential role in the initiation and regulation of chromosomal replication. ATP-DnaA binds to the origin of replication (oriC) to initiate formation of the DNA replication initiation complex once per cell cycle. Binds the DnaA box (a 9 base pair repeat at the origin) and separates the double-stranded (ds)DNA. Forms a right-handed helical filament on oriC DNA; dsDNA binds to the exterior of the filament while single-stranded (ss)DNA is stabiized in the filament's interior. The ATP-DnaA-oriC complex binds and stabilizes one strand of the AT-rich DNA unwinding element (DUE), permitting loading of DNA polymerase. After initiation quickly degrades to an ADP-DnaA complex that is not apt for DNA replication. Binds acidic phospholipids. The protein is Chromosomal replication initiator protein DnaA of Streptococcus pyogenes serotype M4 (strain MGAS10750).